The primary structure comprises 152 residues: Anaerobic nitrite reductase HBI (152 aa).

The Globin domain occupies 2–151; that stretch reads ALTEKQEALL…LVATIKAEMK (150 aa). The Homodimerization signature appears at 35–39; that stretch reads EAAPE. 5 residues coordinate heme b: Ser-45, Lys-59, His-63, Arg-93, and His-98. The Homodimerization motif lies at 105 to 117; that stretch reads DPHFEVMKGALLG.

Belongs to the plant globin family. Homodimer. Heme b serves as cofactor. In terms of tissue distribution, root nodules.

The protein localises to the cytoplasm. It localises to the nucleus. The catalysed reaction is Fe(III)-heme b-[protein] + nitric oxide + H2O = Fe(II)-heme b-[protein] + nitrite + 2 H(+). Phytoglobin that reduces nitrite to nitric oxide (NO) under anoxic conditions (e.g. during flooding or in waterlogged soil) and upon root nodulation. Required for general plant development and during nodulation, especially for the onset of symbiosis. Monitors nitric oxide (NO) levels during early phase of the nitrogen-fixing symbiosis and buffers oxygen in functioning nodules. May not function as an oxygen storage or transport protein. Has an unusually high affinity for O(2) through a hexacoordinate heme iron because of a very low dissociation constant. This Casuarina glauca (Swamp oak) protein is Anaerobic nitrite reductase HBI.